Consider the following 135-residue polypeptide: S-protein homolog 29 (135 aa).

The signal sequence occupies residues Met1 to Gly24. A glycan (N-linked (GlcNAc...) asparagine) is linked at Asn110.

It belongs to the plant self-incompatibility (S1) protein family.

It localises to the secreted. The sequence is that of S-protein homolog 29 from Arabidopsis thaliana (Mouse-ear cress).